The following is a 575-amino-acid chain: NEDD4-binding protein 2-like 2 (575 aa).

3 stretches are compositionally biased toward basic and acidic residues: residues Gln69–Gly87, Pro129–Thr142, and Asp149–Met167. Disordered regions lie at residues Gln69 to Thr169 and Gly555 to Tyr575. A coiled-coil region spans residues Ser162–Glu194. Residues Gly564–Tyr575 show a composition bias toward polar residues.

This chain is NEDD4-binding protein 2-like 2 (N4bp2l2), found in Mus musculus (Mouse).